The sequence spans 906 residues: Coatomer subunit beta' (906 aa).

WD repeat units lie at residues 13 to 52 (ARSDRVKSVDLHPTEPWMLASLYNGSVCVWNHETQTLVKT), 55 to 94 (VCDLPVRAAKFVARKNWVVTGADDMQIRVFNYNTLERVHM), 97 to 136 (AHSDYIRCIAVHPTQPFILTSSDDMLIKLWDWDKKWSCSQ), 140 to 180 (GHTH…PNFT), 183 to 224 (GHEK…CVQT), and 227 to 266 (GHAQNVSCASFHPELPIIITGSEDGTVRIWHSSTYRLEST). At lysine 627 the chain carries N6-acetyllysine. The segment at 837-870 (EEGKDFQPSRSTAQQELDGKPASPTPVIVASHTA) is disordered. Position 859 is a phosphoserine (serine 859). Threonine 861 is subject to Phosphothreonine. Residues 866–891 (ASHTANKEEKSLLELEVDLDNLELED) adopt a coiled-coil conformation.

Belongs to the WD repeat COPB2 family. In terms of assembly, oligomeric complex that consists of at least the alpha, beta, beta', gamma, delta, epsilon and zeta subunits. Probably interacts with PEX11A. Interacts with SCYL1. Interacts with JAGN1.

Its subcellular location is the cytoplasm. The protein localises to the cytosol. It is found in the golgi apparatus membrane. The protein resides in the cytoplasmic vesicle. It localises to the COPI-coated vesicle membrane. In terms of biological role, the coatomer is a cytosolic protein complex that binds to dilysine motifs and reversibly associates with Golgi non-clathrin-coated vesicles, which further mediate biosynthetic protein transport from the ER, via the Golgi up to the trans Golgi network. Coatomer complex is required for budding from Golgi membranes, and is essential for the retrograde Golgi-to-ER transport of dilysine-tagged proteins. In mammals, the coatomer can only be recruited by membranes associated to ADP-ribosylation factors (ARFs), which are small GTP-binding proteins; the complex also influences the Golgi structural integrity, as well as the processing, activity, and endocytic recycling of LDL receptors. Its function is as follows. This coatomer complex protein, essential for Golgi budding and vesicular trafficking, is a selective binding protein (RACK) for protein kinase C, epsilon type. It binds to Golgi membranes in a GTP-dependent manner. The sequence is that of Coatomer subunit beta' (COPB2) from Homo sapiens (Human).